The following is a 273-amino-acid chain: SET domain-containing protein 9 (273 aa).

An SET domain is found at 96–269 (FSVAQATSSL…QGEELFSNYY (174 aa)). Tyrosine 268 is an S-adenosyl-L-methionine binding site.

Belongs to the class V-like SAM-binding methyltransferase superfamily.

The protein is SET domain-containing protein 9 (SETD9) of Pongo abelii (Sumatran orangutan).